The chain runs to 193 residues: Rho-related GTP-binding protein RhoA-A (193 aa).

GTP is bound by residues 12 to 19 (GDGACGKT), 30 to 37 (FPEVYVPT), 59 to 63 (DTAGQ), 117 to 120 (NKKD), and 160 to 162 (SAK). A (Microbial infection) O-linked (GlcNAc) tyrosine; by Yersinia Afp18 glycan is attached at Y34. C190 is modified (cysteine methyl ester). C190 carries the S-geranylgeranyl cysteine lipid modification. Positions 191-193 (ALL) are cleaved as a propeptide — removed in mature form.

It belongs to the small GTPase superfamily. Rho family. (Microbial infection) Glycosylated at Tyr-34 by Yersinia ruckeri toxin Afp18. Mono-O-GlcNAcylation by Afp18 inhibits RhoA activation by guanine nucleotide exchange factors and blocks RhoA signaling.

It is found in the cell membrane. Regulates a signal transduction pathway linking plasma membrane receptors to the assembly of focal adhesions and actin stress fibers. This is Rho-related GTP-binding protein RhoA-A from Danio rerio (Zebrafish).